Here is a 384-residue protein sequence, read N- to C-terminus: tRNA(Met) cytidine acetate ligase (384 aa).

ATP-binding positions include 7–20 (VAEY…HEFL), Gly-101, Asn-153, and Arg-178.

It belongs to the TmcAL family.

It is found in the cytoplasm. It carries out the reaction cytidine(34) in elongator tRNA(Met) + acetate + ATP = N(4)-acetylcytidine(34) in elongator tRNA(Met) + AMP + diphosphate. Functionally, catalyzes the formation of N(4)-acetylcytidine (ac(4)C) at the wobble position of elongator tRNA(Met), using acetate and ATP as substrates. First activates an acetate ion to form acetyladenylate (Ac-AMP) and then transfers the acetyl group to tRNA to form ac(4)C34. The sequence is that of tRNA(Met) cytidine acetate ligase from Lactobacillus delbrueckii subsp. bulgaricus (strain ATCC BAA-365 / Lb-18).